The following is a 353-amino-acid chain: Thiamine-phosphate synthase (353 aa).

A unknown region spans residues 1–128 (MESMPVAPST…ARTAAAVRYA (128 aa)). Residues 129 to 353 (LYDHEVRILE…ASRQLLDLLT (225 aa)) form a thiamine-phosphate synthase region. 4-amino-2-methyl-5-(diphosphooxymethyl)pyrimidine-binding positions include 185–189 (QYRRK) and Asn-217. The Mg(2+) site is built by Asp-218 and Asp-237. A 4-amino-2-methyl-5-(diphosphooxymethyl)pyrimidine-binding site is contributed by Ser-256. 282–284 (TAT) lines the 2-[(2R,5Z)-2-carboxy-4-methylthiazol-5(2H)-ylidene]ethyl phosphate pocket. Position 285 (Lys-285) interacts with 4-amino-2-methyl-5-(diphosphooxymethyl)pyrimidine. 2-[(2R,5Z)-2-carboxy-4-methylthiazol-5(2H)-ylidene]ethyl phosphate contacts are provided by residues Gly-312 and 332-333 (VS).

The protein belongs to the thiamine-phosphate synthase family. Mg(2+) is required as a cofactor.

It carries out the reaction 2-[(2R,5Z)-2-carboxy-4-methylthiazol-5(2H)-ylidene]ethyl phosphate + 4-amino-2-methyl-5-(diphosphooxymethyl)pyrimidine + 2 H(+) = thiamine phosphate + CO2 + diphosphate. The catalysed reaction is 2-(2-carboxy-4-methylthiazol-5-yl)ethyl phosphate + 4-amino-2-methyl-5-(diphosphooxymethyl)pyrimidine + 2 H(+) = thiamine phosphate + CO2 + diphosphate. It catalyses the reaction 4-methyl-5-(2-phosphooxyethyl)-thiazole + 4-amino-2-methyl-5-(diphosphooxymethyl)pyrimidine + H(+) = thiamine phosphate + diphosphate. Its pathway is cofactor biosynthesis; thiamine diphosphate biosynthesis; thiamine phosphate from 4-amino-2-methyl-5-diphosphomethylpyrimidine and 4-methyl-5-(2-phosphoethyl)-thiazole: step 1/1. Its function is as follows. Condenses 4-methyl-5-(beta-hydroxyethyl)thiazole monophosphate (THZ-P) and 2-methyl-4-amino-5-hydroxymethyl pyrimidine pyrophosphate (HMP-PP) to form thiamine monophosphate (TMP). This Synechococcus sp. (strain WH7803) protein is Thiamine-phosphate synthase.